A 677-amino-acid chain; its full sequence is Methionine--tRNA ligase (677 aa).

The 'HIGH' region motif lies at 15–25 (PYANGSIHLGH). 4 residues coordinate Zn(2+): cysteine 146, cysteine 149, cysteine 159, and cysteine 162. The short motif at 333 to 337 (KMSKS) is the 'KMSKS' region element. Lysine 336 contacts ATP. A tRNA-binding domain is found at 575–677 (DFAKIDLRVA…SGAKPGQQVK (103 aa)).

The protein belongs to the class-I aminoacyl-tRNA synthetase family. MetG type 1 subfamily. As to quaternary structure, homodimer. Zn(2+) serves as cofactor.

The protein localises to the cytoplasm. The enzyme catalyses tRNA(Met) + L-methionine + ATP = L-methionyl-tRNA(Met) + AMP + diphosphate. Functionally, is required not only for elongation of protein synthesis but also for the initiation of all mRNA translation through initiator tRNA(fMet) aminoacylation. The chain is Methionine--tRNA ligase from Cronobacter sakazakii (strain ATCC BAA-894) (Enterobacter sakazakii).